The following is a 207-amino-acid chain: Large ribosomal subunit protein uL4 (207 aa).

Residues 43–80 form a disordered region; sequence RRRSGTAKSKGRSEVSGSTRKLYRQKGTGNARSGSVKS. A compositionally biased stretch (polar residues) spans 69 to 78; that stretch reads GTGNARSGSV.

This sequence belongs to the universal ribosomal protein uL4 family. As to quaternary structure, part of the 50S ribosomal subunit.

In terms of biological role, one of the primary rRNA binding proteins, this protein initially binds near the 5'-end of the 23S rRNA. It is important during the early stages of 50S assembly. It makes multiple contacts with different domains of the 23S rRNA in the assembled 50S subunit and ribosome. Functionally, forms part of the polypeptide exit tunnel. This chain is Large ribosomal subunit protein uL4, found in Desulforapulum autotrophicum (strain ATCC 43914 / DSM 3382 / VKM B-1955 / HRM2) (Desulfobacterium autotrophicum).